A 621-amino-acid polypeptide reads, in one-letter code: CEP295 N-terminal-like protein (621 aa).

A disordered region spans residues 142 to 253 (GGRARENEPD…RSKGADLERS (112 aa)). The span at 159–170 (RSARPPRAKEKH) shows a compositional bias: basic residues. Over residues 171–185 (RAALSEERSCREELG) the composition is skewed to basic and acidic residues. The segment covering 203–213 (KPQTTKATGRM) has biased composition (polar residues). The segment covering 219 to 229 (PPEKRKGRPEP) has biased composition (basic and acidic residues). A coiled-coil region spans residues 328 to 359 (QCTLREKNKWQKELELAFEELFNINRKLKKHL). Disordered stretches follow at residues 385-421 (CGAG…ASKT), 491-529 (DQAD…PDMS), and 543-586 (REQR…DRHS). The stretch at 498 to 525 (STASRQRQKAEMEQRRQKQLESLEQMEH) forms a coiled coil. Positions 505 to 529 (QKAEMEQRRQKQLESLEQMEHPDMS) are enriched in basic and acidic residues. Polar residues predominate over residues 568 to 578 (ELSTTSPSGTS).

The protein localises to the cell projection. It localises to the cilium. In Homo sapiens (Human), this protein is CEP295 N-terminal-like protein.